Consider the following 137-residue polypeptide: Glutamate mutase sigma subunit (137 aa).

A B12-binding domain is found at 3–137 (KKTIVLGVIG…ADMKEVLGVE (135 aa)). Adenosylcob(III)alamin is bound by residues 13–17 (SDCHA), His16, 61–63 (SSL), and 93–97 (NIVVG).

It belongs to the methylaspartate mutase GlmS subunit family. In terms of assembly, heterotetramer composed of 2 epsilon subunits (GlmE) and 2 sigma subunits (GlmS). GlmE exists as a homodimer and GlmS as a monomer. The cofactor is adenosylcob(III)alamin.

It catalyses the reaction (2S,3S)-3-methyl-L-aspartate = L-glutamate. It functions in the pathway amino-acid degradation; L-glutamate degradation via mesaconate pathway; acetate and pyruvate from L-glutamate: step 1/4. In terms of biological role, catalyzes the carbon skeleton rearrangement of L-glutamate to L-threo-3-methylaspartate ((2S,3S)-3-methylaspartate). The chain is Glutamate mutase sigma subunit from Clostridium tetanomorphum.